The primary structure comprises 61 residues: Small ribosomal subunit protein uS14B (61 aa).

Residues C24, C27, C40, and C43 each contribute to the Zn(2+) site.

It belongs to the universal ribosomal protein uS14 family. Zinc-binding uS14 subfamily. Part of the 30S ribosomal subunit. Contacts proteins S3 and S10. Zn(2+) serves as cofactor.

Its function is as follows. Binds 16S rRNA, required for the assembly of 30S particles and may also be responsible for determining the conformation of the 16S rRNA at the A site. The chain is Small ribosomal subunit protein uS14B from Mycolicibacterium gilvum (strain PYR-GCK) (Mycobacterium gilvum (strain PYR-GCK)).